Here is a 413-residue protein sequence, read N- to C-terminus: Gamma-glutamyl phosphate reductase (413 aa).

The protein belongs to the gamma-glutamyl phosphate reductase family.

The protein localises to the cytoplasm. It catalyses the reaction L-glutamate 5-semialdehyde + phosphate + NADP(+) = L-glutamyl 5-phosphate + NADPH + H(+). The protein operates within amino-acid biosynthesis; L-proline biosynthesis; L-glutamate 5-semialdehyde from L-glutamate: step 2/2. Functionally, catalyzes the NADPH-dependent reduction of L-glutamate 5-phosphate into L-glutamate 5-semialdehyde and phosphate. The product spontaneously undergoes cyclization to form 1-pyrroline-5-carboxylate. This is Gamma-glutamyl phosphate reductase from Thermus thermophilus (strain ATCC 27634 / DSM 579 / HB8).